Here is a 212-residue protein sequence, read N- to C-terminus: Pyridoxine/pyridoxamine 5'-phosphate oxidase (212 aa).

Substrate is bound by residues 8-11 (RREY) and lysine 66. Residues 61-66 (RIVLLK), 76-77 (FT), arginine 82, lysine 83, and glutamine 105 each bind FMN. Tyrosine 123, arginine 127, and serine 131 together coordinate substrate. FMN is bound by residues 140-141 (QS) and tryptophan 185. 191–193 (RLH) contacts substrate. Arginine 195 provides a ligand contact to FMN.

It belongs to the pyridoxamine 5'-phosphate oxidase family. Homodimer. FMN serves as cofactor.

It catalyses the reaction pyridoxamine 5'-phosphate + O2 + H2O = pyridoxal 5'-phosphate + H2O2 + NH4(+). The catalysed reaction is pyridoxine 5'-phosphate + O2 = pyridoxal 5'-phosphate + H2O2. It functions in the pathway cofactor metabolism; pyridoxal 5'-phosphate salvage; pyridoxal 5'-phosphate from pyridoxamine 5'-phosphate: step 1/1. The protein operates within cofactor metabolism; pyridoxal 5'-phosphate salvage; pyridoxal 5'-phosphate from pyridoxine 5'-phosphate: step 1/1. In terms of biological role, catalyzes the oxidation of either pyridoxine 5'-phosphate (PNP) or pyridoxamine 5'-phosphate (PMP) into pyridoxal 5'-phosphate (PLP). The sequence is that of Pyridoxine/pyridoxamine 5'-phosphate oxidase from Shewanella pealeana (strain ATCC 700345 / ANG-SQ1).